The sequence spans 165 residues: Glutamyl-tRNA(Gln) amidotransferase subunit F, mitochondrial (165 aa).

The N-terminal 19 residues, 1-19 (MKSILRSTTRNLITSSRRF), are a transit peptide targeting the mitochondrion.

It belongs to the GatF family. Subunit of the heterotrimeric GatFAB amidotransferase (AdT) complex, composed of A, B and F subunits.

The protein localises to the mitochondrion inner membrane. The enzyme catalyses L-glutamyl-tRNA(Gln) + L-glutamine + ATP + H2O = L-glutaminyl-tRNA(Gln) + L-glutamate + ADP + phosphate + H(+). In terms of biological role, allows the formation of correctly charged Gln-tRNA(Gln) through the transamidation of misacylated Glu-tRNA(Gln) in the mitochondria. The reaction takes place in the presence of glutamine and ATP through an activated gamma-phospho-Glu-tRNA(Gln). Required for proper protein synthesis within the mitochondrion. The polypeptide is Glutamyl-tRNA(Gln) amidotransferase subunit F, mitochondrial (Candida albicans (strain WO-1) (Yeast)).